A 117-amino-acid chain; its full sequence is Phosphoribosyl-ATP pyrophosphatase (117 aa).

It belongs to the PRA-PH family.

Its subcellular location is the cytoplasm. It carries out the reaction 1-(5-phospho-beta-D-ribosyl)-ATP + H2O = 1-(5-phospho-beta-D-ribosyl)-5'-AMP + diphosphate + H(+). It participates in amino-acid biosynthesis; L-histidine biosynthesis; L-histidine from 5-phospho-alpha-D-ribose 1-diphosphate: step 2/9. This chain is Phosphoribosyl-ATP pyrophosphatase, found in Rhodospirillum rubrum (strain ATCC 11170 / ATH 1.1.1 / DSM 467 / LMG 4362 / NCIMB 8255 / S1).